A 231-amino-acid polypeptide reads, in one-letter code: ATP-dependent dethiobiotin synthetase BioD (231 aa).

12-17 (DVGKTV) is a binding site for ATP. Mg(2+) is bound at residue Thr16. Lys37 is an active-site residue. Thr41 lines the substrate pocket. ATP-binding positions include Asp50, 109 to 112 (EGAG), 170 to 171 (GS), and 200 to 202 (PAG). Positions 50 and 109 each coordinate Mg(2+).

Belongs to the dethiobiotin synthetase family. In terms of assembly, homodimer. It depends on Mg(2+) as a cofactor.

The protein localises to the cytoplasm. The enzyme catalyses (7R,8S)-7,8-diammoniononanoate + CO2 + ATP = (4R,5S)-dethiobiotin + ADP + phosphate + 3 H(+). It participates in cofactor biosynthesis; biotin biosynthesis; biotin from 7,8-diaminononanoate: step 1/2. Its function is as follows. Catalyzes a mechanistically unusual reaction, the ATP-dependent insertion of CO2 between the N7 and N8 nitrogen atoms of 7,8-diaminopelargonic acid (DAPA, also called 7,8-diammoniononanoate) to form a ureido ring. This Rhodococcus jostii (strain RHA1) protein is ATP-dependent dethiobiotin synthetase BioD.